A 727-amino-acid chain; its full sequence is Cyclin-T1 (727 aa).

Residue Ser-117 is modified to Phosphoserine. Residues 253-270 carry the Nuclear localization signal, and interaction with Tat-TAR RNA motif; it reads KRIRNWRACQAAKKTKAD. A compositionally biased stretch (low complexity) spans 302-322; sequence MSTSSTTSTVPSLPTTEESSS. The disordered stretch occupies residues 302–326; sequence MSTSSTTSTVPSLPTTEESSSNLSG. Residue Lys-343 forms a Glycyl lysine isopeptide (Lys-Gly) (interchain with G-Cter in SUMO2) linkage. A coiled-coil region spans residues 386-427; it reads SAKVSLKEYRAKHAEELAAQKRQLENMEANVKSQYAYAAQNL. At Ser-390 the chain carries Phosphoserine. Position 392 is an N6-acetyllysine (Lys-392). Residue Lys-417 forms a Glycyl lysine isopeptide (Lys-Gly) (interchain with G-Cter in SUMO2) linkage. An ADP-ribosylserine mark is found at Ser-418, Ser-476, and Ser-477. Positions 482–552 are histidine-rich domain (HRD); it reads IKMRIKVHAA…RPGDPKHSSQ (71 aa). A Glycyl lysine isopeptide (Lys-Gly) (interchain with G-Cter in SUMO2) cross-link involves residue Lys-483. The span at 486 to 508 shows a compositional bias: basic and acidic residues; sequence IKVHAAPDKHNSIDDSVTKSREH. Disordered stretches follow at residues 486–591 and 692–727; these read IKVH…DHPA and LNPR…PLPK. N6-(ADP-ribosyl)lysine is present on Lys-487. His-489 is subject to ADP-ribosylhistidine. Phosphoserine occurs at positions 497 and 501. The span at 509–532 shows a compositional bias: basic residues; it reads KEKHKTHPSNHHHHHNHHSHKHSH. At His-532 the chain carries ADP-ribosylhistidine. Residues Ser-533, Ser-551, and Ser-554 each carry the ADP-ribosylserine modification. His-558 is modified (ADP-ribosylhistidine). The span at 562-572 shows a compositional bias: low complexity; it reads SLSSSFSSSSS. Residue Ser-565 is modified to ADP-ribosylserine. Ser-566 is modified (phosphoserine). Pro residues predominate over residues 711-727; it reads LPPLPSEPPPPLPPLPK.

The protein belongs to the cyclin family. Cyclin C subfamily. In terms of assembly, cyclin-T1 is the predominant cyclin that associates with CDK9 to form a heterodimer called P-TEFb. P-TEFb forms a complex with AFF4/AF5Q31. Component of a complex which is at least composed of HTATSF1/Tat-SF1, P-TEFb complex, RNA pol II, SUPT5H, and NCL/nucleolin. Component of the 7SK snRNP complex at least composed of P-TEFb (composed of CDK9 and CCNT1/cyclin-T1), HEXIM1, HEXIM2, BCDIN3, SART3 proteins and 7SK and U6 snRNAs. Interacts (via central region) with ZMYND8 (via N-terminus); the interaction is direct and the association appears to occur between homodimeric ZMYND8 and the activated form of the P-TEFb complex. Interacts with BRD4, targets chromatin binding. Interacts with JMJD6. Interacts with MDFIC. Interacts with HSF1. Interacts with HTATSF1. Interacts with TBX21. Post-translationally, ADP-ribosylation on serine residues by PARP1 in response to DNA damage disrupts the phase separation activity of CCNT1, thereby preventing activation of CDK9.

It is found in the nucleus. In terms of biological role, regulatory subunit of the cyclin-dependent kinase pair (CDK9/cyclin-T1) complex, also called positive transcription elongation factor B (P-TEFb), which facilitates the transition from abortive to productive elongation by phosphorylating the CTD (C-terminal domain) of the large subunit of RNA polymerase II (RNA Pol II). Required to activate the protein kinase activity of CDK9: acts by mediating formation of liquid-liquid phase separation (LLPS) that enhances binding of P-TEFb to the CTD of RNA Pol II. This chain is Cyclin-T1 (CCNT1), found in Equus caballus (Horse).